A 444-amino-acid polypeptide reads, in one-letter code: Tubulin beta chain (444 aa).

Positions 1-4 match the MREI motif motif; sequence MREI. GTP is bound by residues Q11, E69, S138, G142, T143, G144, N204, and N226. Mg(2+) is bound at residue E69. Residues 421 to 444 form a disordered region; it reads EYQQYQDATAEEEEDFNEEAEEEA. Residues 429-444 are compositionally biased toward acidic residues; that stretch reads TAEEEEDFNEEAEEEA. At E438 the chain carries 5-glutamyl polyglutamate.

Belongs to the tubulin family. In terms of assembly, dimer of alpha and beta chains. A typical microtubule is a hollow water-filled tube with an outer diameter of 25 nm and an inner diameter of 15 nM. Alpha-beta heterodimers associate head-to-tail to form protofilaments running lengthwise along the microtubule wall with the beta-tubulin subunit facing the microtubule plus end conferring a structural polarity. Microtubules usually have 13 protofilaments but different protofilament numbers can be found in some organisms and specialized cells. Requires Mg(2+) as cofactor. Post-translationally, some glutamate residues at the C-terminus are polyglycylated, resulting in polyglycine chains on the gamma-carboxyl group. Glycylation is mainly limited to tubulin incorporated into axonemes (cilia and flagella) whereas glutamylation is prevalent in neuronal cells, centrioles, axonemes, and the mitotic spindle. Both modifications can coexist on the same protein on adjacent residues, and lowering polyglycylation levels increases polyglutamylation, and reciprocally. The precise function of polyglycylation is still unclear. Some glutamate residues at the C-terminus are polyglutamylated, resulting in polyglutamate chains on the gamma-carboxyl group. Polyglutamylation plays a key role in microtubule severing by spastin (SPAST). SPAST preferentially recognizes and acts on microtubules decorated with short polyglutamate tails: severing activity by SPAST increases as the number of glutamates per tubulin rises from one to eight, but decreases beyond this glutamylation threshold.

The protein resides in the cytoplasm. It is found in the cytoskeleton. Functionally, tubulin is the major constituent of microtubules, a cylinder consisting of laterally associated linear protofilaments composed of alpha- and beta-tubulin heterodimers. Microtubules grow by the addition of GTP-tubulin dimers to the microtubule end, where a stabilizing cap forms. Below the cap, tubulin dimers are in GDP-bound state, owing to GTPase activity of alpha-tubulin. The protein is Tubulin beta chain (tubb) of Xenopus laevis (African clawed frog).